Here is a 133-residue protein sequence, read N- to C-terminus: Small ribosomal subunit protein uS8 (133 aa).

The protein belongs to the universal ribosomal protein uS8 family. As to quaternary structure, part of the 30S ribosomal subunit. Contacts proteins S5 and S12.

Its function is as follows. One of the primary rRNA binding proteins, it binds directly to 16S rRNA central domain where it helps coordinate assembly of the platform of the 30S subunit. In Oenococcus oeni (strain ATCC BAA-331 / PSU-1), this protein is Small ribosomal subunit protein uS8.